Reading from the N-terminus, the 72-residue chain is Translation initiation factor IF-1 (72 aa).

One can recognise an S1-like domain in the interval M1 to K72.

The protein belongs to the IF-1 family. In terms of assembly, component of the 30S ribosomal translation pre-initiation complex which assembles on the 30S ribosome in the order IF-2 and IF-3, IF-1 and N-formylmethionyl-tRNA(fMet); mRNA recruitment can occur at any time during PIC assembly.

The protein resides in the cytoplasm. Functionally, one of the essential components for the initiation of protein synthesis. Stabilizes the binding of IF-2 and IF-3 on the 30S subunit to which N-formylmethionyl-tRNA(fMet) subsequently binds. Helps modulate mRNA selection, yielding the 30S pre-initiation complex (PIC). Upon addition of the 50S ribosomal subunit IF-1, IF-2 and IF-3 are released leaving the mature 70S translation initiation complex. The polypeptide is Translation initiation factor IF-1 (Acetivibrio thermocellus (strain ATCC 27405 / DSM 1237 / JCM 9322 / NBRC 103400 / NCIMB 10682 / NRRL B-4536 / VPI 7372) (Clostridium thermocellum)).